The primary structure comprises 262 residues: UPF0758 protein BTH_I0781 (262 aa).

Residues 1 to 45 form a disordered region; it reads MQYEIVSAGENVGDEPERERPVAQAAAAPGIPRPAALPAAGAARR. The segment covering 22-43 has biased composition (low complexity); it reads VAQAAAAPGIPRPAALPAAGAA. Residues 140 to 262 enclose the MPN domain; the sequence is LVDSPGAVDD…TFSFAQAGWI (123 aa). His-211, His-213, and Asp-224 together coordinate Zn(2+). Residues 211–224 carry the JAMM motif motif; sequence HNHPSGAVRPSAAD.

The protein belongs to the UPF0758 family.

The chain is UPF0758 protein BTH_I0781 from Burkholderia thailandensis (strain ATCC 700388 / DSM 13276 / CCUG 48851 / CIP 106301 / E264).